A 431-amino-acid chain; its full sequence is uncharacterized protein (431 aa).

This is an uncharacterized protein from Acanthamoeba polyphaga mimivirus (APMV).